The chain runs to 151 residues: Multiprotein-bridging factor 1 (151 aa).

Disordered stretches follow at residues 1–29 and 78–98; these read MSDW…ARSQ and DPNV…SQKD. The essential for TBP-binding stretch occupies residues 41–119; sequence VVSVDKKYGS…VNDYEAARAI (79 aa). The 55-residue stretch at 85–139 folds into the HTH cro/C1-type domain; that stretch reads ISRARTDKKMSQKDLATKINEKPTVVNDYEAARAIPNQQVLSKLERALGVKLRGN. The span at 88–98 shows a compositional bias: basic and acidic residues; it reads ARTDKKMSQKD. The segment at residues 96 to 115 is a DNA-binding region (H-T-H motif); the sequence is QKDLATKINEKPTVVNDYEA. Ser143 carries the post-translational modification Phosphoserine.

The protein belongs to the MBF1 family. As to quaternary structure, interacts with TBP and the transcription factor GCN4. Interacts with RPS3/us3.

It localises to the cytoplasm. The protein localises to the nucleus. Transcriptional coactivator that stimulates GCN4-dependent transcriptional activity by bridging the DNA-binding region of GCN4 and TBP (SPT15), thereby recruiting TBP to GCN4-bound promoters. Involved in induction of the ribosome quality control (RQC) pathway; a pathway that degrades nascent peptide chains during problematic translation. Required to prevent stalled ribosomes from frameshifting. The polypeptide is Multiprotein-bridging factor 1 (MBF1) (Saccharomyces cerevisiae (strain ATCC 204508 / S288c) (Baker's yeast)).